We begin with the raw amino-acid sequence, 235 residues long: Large ribosomal subunit protein uL1 (235 aa).

Belongs to the universal ribosomal protein uL1 family. Part of the 50S ribosomal subunit.

Functionally, binds directly to 23S rRNA. The L1 stalk is quite mobile in the ribosome, and is involved in E site tRNA release. Protein L1 is also a translational repressor protein, it controls the translation of the L11 operon by binding to its mRNA. The protein is Large ribosomal subunit protein uL1 of Prochlorococcus marinus (strain MIT 9303).